The primary structure comprises 224 residues: Endonuclease NucS (224 aa).

It belongs to the NucS endonuclease family.

Its subcellular location is the cytoplasm. In terms of biological role, cleaves both 3' and 5' ssDNA extremities of branched DNA structures. This Mycolicibacterium smegmatis (strain ATCC 700084 / mc(2)155) (Mycobacterium smegmatis) protein is Endonuclease NucS.